Reading from the N-terminus, the 217-residue chain is DNA transformation protein TfoX (217 aa).

The protein belongs to the Sxy/TfoX family.

In terms of biological role, required for DNA transformation. Positively regulates genes required for DNA transformation (late competence-specific genes) in association with CRP. Required for expression of the late competence-specific gene, com101A. Required for expression of the dprABC operon. The polypeptide is DNA transformation protein TfoX (Haemophilus influenzae (strain ATCC 51907 / DSM 11121 / KW20 / Rd)).